A 197-amino-acid polypeptide reads, in one-letter code: Imidazoleglycerol-phosphate dehydratase (197 aa).

The protein belongs to the imidazoleglycerol-phosphate dehydratase family.

It is found in the cytoplasm. It catalyses the reaction D-erythro-1-(imidazol-4-yl)glycerol 3-phosphate = 3-(imidazol-4-yl)-2-oxopropyl phosphate + H2O. Its pathway is amino-acid biosynthesis; L-histidine biosynthesis; L-histidine from 5-phospho-alpha-D-ribose 1-diphosphate: step 6/9. In Leptospira biflexa serovar Patoc (strain Patoc 1 / Ames), this protein is Imidazoleglycerol-phosphate dehydratase.